Consider the following 284-residue polypeptide: Proline-rich protein 32 (284 aa).

Disordered regions lie at residues 59-80, 97-119, and 143-171; these read RPPF…APRH, EINS…NMSQ, and SGNN…RGPP.

This Mus musculus (Mouse) protein is Proline-rich protein 32 (Prr32).